A 168-amino-acid chain; its full sequence is Transcription antitermination protein NusB (168 aa).

It belongs to the NusB family.

In terms of biological role, involved in transcription antitermination. Required for transcription of ribosomal RNA (rRNA) genes. Binds specifically to the boxA antiterminator sequence of the ribosomal RNA (rrn) operons. This Bradyrhizobium sp. (strain ORS 278) protein is Transcription antitermination protein NusB.